Here is a 356-residue protein sequence, read N- to C-terminus: Growth hormone-regulated TBC protein 1-A (356 aa).

Residues M1 to S29 are disordered. Residues R9–T22 show a composition bias toward polar residues. Positions G87 to G277 constitute a Rab-GAP TBC domain.

May act as a GTPase-activating protein for Rab family protein(s). The polypeptide is Growth hormone-regulated TBC protein 1-A (grtp1a) (Danio rerio (Zebrafish)).